The following is a 172-amino-acid chain: Ribosome maturation factor RimM (172 aa).

A PRC barrel domain is found at 97–170; that stretch reads ENEFYFHEII…KITIEVMEGL (74 aa).

The protein belongs to the RimM family. As to quaternary structure, binds ribosomal protein uS19.

Its subcellular location is the cytoplasm. Functionally, an accessory protein needed during the final step in the assembly of 30S ribosomal subunit, possibly for assembly of the head region. Essential for efficient processing of 16S rRNA. May be needed both before and after RbfA during the maturation of 16S rRNA. It has affinity for free ribosomal 30S subunits but not for 70S ribosomes. This Listeria monocytogenes serovar 1/2a (strain ATCC BAA-679 / EGD-e) protein is Ribosome maturation factor RimM.